The chain runs to 401 residues: Cytochrome P450 BJ-1 (401 aa).

Position 350 (cysteine 350) interacts with heme.

It belongs to the cytochrome P450 family. It depends on heme as a cofactor.

Functionally, cytochromes P450 are a group of heme-thiolate monooxygenases. They oxidize a variety of structurally unrelated compounds, including steroids, fatty acids, and xenobiotics. This Bradyrhizobium diazoefficiens (strain JCM 10833 / BCRC 13528 / IAM 13628 / NBRC 14792 / USDA 110) protein is Cytochrome P450 BJ-1 (cyp112).